Reading from the N-terminus, the 503-residue chain is MDFSIKGCDWSKGEAKGFLTGKSDCIVLGIFEAQTLSGAALDIDTATKGLISRVIKAGDMDGKRGKTLFLHEVSGIGASRVLLVGLGKQDAFNQKAYNDAVTAAWRALLATKVVQVTFTLAQLPVDERSSDWGVRAAILALRNETYRFTQMKSKPEPASHTLKRVVFSVDPSDEKAAKVAVKQAVALANGMDLTRDLGNLPGNVCTPTYLGNTAKKIAKDWGLKAEVLGLKQIQALKMGSFLSVARASVEPPQFIVLHYQGAAAKAAPVVLVGKGITFDTGGISLKPGEGMDEMKYDMCGAGSVLGTMRAVAEMGLKINVVAIVPTCENMPGGNATKPGDIVTSMKGLTIEVLNTDAEGRLILCDALTYAERFKPAAVIDVATLTGACVIALGGHNSGLFSTDDALAGELLDASREANDPAWRMPLDDEYQDQLKSNFADLANIGGRPAGAVTAACFLSRFTESYPWAHLDIAGTAWKGGAAKGATGRPVPLLAQFLIDRAGQ.

Residues Lys-274 and Asp-279 each coordinate Mn(2+). Lys-286 is a catalytic residue. Residues Asp-297, Asp-356, and Glu-358 each contribute to the Mn(2+) site. Residue Arg-360 is part of the active site.

This sequence belongs to the peptidase M17 family. Requires Mn(2+) as cofactor.

Its subcellular location is the cytoplasm. The catalysed reaction is Release of an N-terminal amino acid, Xaa-|-Yaa-, in which Xaa is preferably Leu, but may be other amino acids including Pro although not Arg or Lys, and Yaa may be Pro. Amino acid amides and methyl esters are also readily hydrolyzed, but rates on arylamides are exceedingly low.. It catalyses the reaction Release of an N-terminal amino acid, preferentially leucine, but not glutamic or aspartic acids.. Functionally, presumably involved in the processing and regular turnover of intracellular proteins. Catalyzes the removal of unsubstituted N-terminal amino acids from various peptides. This chain is Probable cytosol aminopeptidase, found in Burkholderia lata (strain ATCC 17760 / DSM 23089 / LMG 22485 / NCIMB 9086 / R18194 / 383).